A 324-amino-acid chain; its full sequence is Glyoxylate/hydroxypyruvate reductase B (324 aa).

Active-site residues include arginine 237 and glutamate 266. Histidine 285 functions as the Proton donor in the catalytic mechanism.

It belongs to the D-isomer specific 2-hydroxyacid dehydrogenase family. GhrB subfamily. As to quaternary structure, homodimer.

It is found in the cytoplasm. The catalysed reaction is glycolate + NADP(+) = glyoxylate + NADPH + H(+). The enzyme catalyses (R)-glycerate + NAD(+) = 3-hydroxypyruvate + NADH + H(+). It carries out the reaction (R)-glycerate + NADP(+) = 3-hydroxypyruvate + NADPH + H(+). Functionally, catalyzes the NADPH-dependent reduction of glyoxylate and hydroxypyruvate into glycolate and glycerate, respectively. This chain is Glyoxylate/hydroxypyruvate reductase B, found in Escherichia coli (strain K12 / MC4100 / BW2952).